The following is a 298-amino-acid chain: MIRNPMSDIDAILITGPTASGKSALAVELARAHDGVVVNADSMQVYDTLSVLTARPSETDMEGIPHHLYGHVPAGQAYSTGVWLREAAALVAQLREEGRTPVFVGGTGLYFKALTGGLSDMPDIPTEIRSRLRERLLAEGTDELYRELVLCDPTAAESLSSQDGQRIVRALEVIEATGQSIAAFQGKTGPVIIDADRARKIVVLPDRAVLHQRINGRFEKMLAMGAEAEVKALLALGLSPEMPVMKAIGVSQIAAMLRGEMTRAEVLDTGAAATRQYAKRQMTWFRNQMDESWERVSP.

ATP is bound at residue 16 to 23 (GPTASGKS). 18-23 (TASGKS) is a substrate binding site. Interaction with substrate tRNA regions lie at residues 41 to 44 (DSMQ) and 165 to 169 (QRIVR).

This sequence belongs to the IPP transferase family. As to quaternary structure, monomer. Mg(2+) is required as a cofactor.

It carries out the reaction adenosine(37) in tRNA + dimethylallyl diphosphate = N(6)-dimethylallyladenosine(37) in tRNA + diphosphate. Its function is as follows. Catalyzes the transfer of a dimethylallyl group onto the adenine at position 37 in tRNAs that read codons beginning with uridine, leading to the formation of N6-(dimethylallyl)adenosine (i(6)A). In Rhizobium rhizogenes (strain K84 / ATCC BAA-868) (Agrobacterium radiobacter), this protein is tRNA dimethylallyltransferase.